An 818-amino-acid chain; its full sequence is Elongation factor G, mitochondrial (818 aa).

The transit peptide at 1–23 directs the protein to the mitochondrion; sequence MFLGRAASRTCRHSQPLRVAARA. Residues 67-96 form a disordered region; that stretch reads MASTATATKPTEEASSSDQPPAPAHKLTDN. A compositionally biased stretch (polar residues) spans 69 to 85; that stretch reads STATATKPTEEASSSDQ. Residues 102–390 enclose the tr-type G domain; it reads TFQRNIGISA…GVCEYLPNPS (289 aa). GTP contacts are provided by residues 111-118, 188-192, and 242-245; these read AHIDSGKT, DTPGH, and NKMD.

This sequence belongs to the TRAFAC class translation factor GTPase superfamily. Classic translation factor GTPase family. EF-G/EF-2 subfamily.

The protein localises to the mitochondrion. The protein operates within protein biosynthesis; polypeptide chain elongation. Its function is as follows. Mitochondrial GTPase that catalyzes the GTP-dependent ribosomal translocation step during translation elongation. During this step, the ribosome changes from the pre-translocational (PRE) to the post-translocational (POST) state as the newly formed A-site-bound peptidyl-tRNA and P-site-bound deacylated tRNA move to the P and E sites, respectively. Catalyzes the coordinated movement of the two tRNA molecules, the mRNA and conformational changes in the ribosome. This is Elongation factor G, mitochondrial from Coprinopsis cinerea (strain Okayama-7 / 130 / ATCC MYA-4618 / FGSC 9003) (Inky cap fungus).